We begin with the raw amino-acid sequence, 421 residues long: 4-aminobutyrate aminotransferase PuuE (421 aa).

Residues 110–111 (GA) and 238–241 (DEVQ) each bind pyridoxal 5'-phosphate. N6-(pyridoxal phosphate)lysine is present on K267. Pyridoxal 5'-phosphate is bound at residue T296.

Belongs to the class-III pyridoxal-phosphate-dependent aminotransferase family. Requires pyridoxal 5'-phosphate as cofactor.

The enzyme catalyses 4-aminobutanoate + 2-oxoglutarate = succinate semialdehyde + L-glutamate. It functions in the pathway amine and polyamine degradation; putrescine degradation; succinate semialdehyde from 4-aminobutanoate. Its activity is regulated as follows. Completely inhibited by succinate and low-aeration conditions. Its function is as follows. Catalyzes the transfer of the amino group from gamma-aminobutyrate (GABA) to alpha-ketoglutarate (KG) to yield succinic semialdehyde (SSA). PuuE is important for utilization of putrescine as the sole nitrogen or carbon source. The sequence is that of 4-aminobutyrate aminotransferase PuuE (puuE) from Escherichia coli (strain K12).